We begin with the raw amino-acid sequence, 155 residues long: Small ribosomal subunit protein uS7c (155 aa).

Belongs to the universal ribosomal protein uS7 family. Part of the 30S ribosomal subunit.

It localises to the plastid. The protein resides in the chloroplast. One of the primary rRNA binding proteins, it binds directly to 16S rRNA where it nucleates assembly of the head domain of the 30S subunit. This chain is Small ribosomal subunit protein uS7c (rps7), found in Saruma henryi (Upright wild ginger).